The chain runs to 21 residues: thr operon leader peptide (21 aa).

Belongs to the thr operon leader peptide family.

In terms of biological role, this protein is involved in control of the biosynthesis of threonine. This is thr operon leader peptide from Shigella boydii serotype 18 (strain CDC 3083-94 / BS512).